The following is a 582-amino-acid chain: ATP-dependent lipid A-core flippase (582 aa).

Transmembrane regions (helical) follow at residues 25 to 45 (AGLI…TFML), 69 to 89 (LAVI…SYCI), 137 to 159 (ASSS…LFIM), 253 to 273 (PIIQ…ASFP), and 275 to 295 (VMET…IALM). The region spanning 28–310 (IVAAIALILN…LTNVNTQFQR (283 aa)) is the ABC transmembrane type-1 domain. Positions 342-578 (IEFRHVTFYY…QGVYAQLNRM (237 aa)) constitute an ABC transporter domain. 376-383 (GRSGSGKS) contacts ATP.

It belongs to the ABC transporter superfamily. Lipid exporter (TC 3.A.1.106) family. In terms of assembly, homodimer.

The protein resides in the cell inner membrane. It catalyses the reaction ATP + H2O + lipid A-core oligosaccharideSide 1 = ADP + phosphate + lipid A-core oligosaccharideSide 2.. Its function is as follows. Involved in lipopolysaccharide (LPS) biosynthesis. Translocates lipid A-core from the inner to the outer leaflet of the inner membrane. Transmembrane domains (TMD) form a pore in the inner membrane and the ATP-binding domain (NBD) is responsible for energy generation. The polypeptide is ATP-dependent lipid A-core flippase (Yersinia pestis bv. Antiqua (strain Antiqua)).